The following is a 110-amino-acid chain: Body wall hemoglobin (110 aa).

Positions 2–110 (VNWAAVVDAF…GAVDAIISHF (109 aa)) constitute a Globin domain. Heme is bound at residue His-70.

This sequence belongs to the globin family. Homotetramer.

This is Body wall hemoglobin from Cerebratulus lacteus (Milky ribbon worm).